The sequence spans 100 residues: Large ribosomal subunit protein uL23 (100 aa).

The protein belongs to the universal ribosomal protein uL23 family. In terms of assembly, part of the 50S ribosomal subunit. Contacts protein L29, and trigger factor when it is bound to the ribosome.

Functionally, one of the early assembly proteins it binds 23S rRNA. One of the proteins that surrounds the polypeptide exit tunnel on the outside of the ribosome. Forms the main docking site for trigger factor binding to the ribosome. The protein is Large ribosomal subunit protein uL23 of Escherichia coli O157:H7.